The following is a 104-amino-acid chain: Large ribosomal subunit protein uL24 (104 aa).

The protein belongs to the universal ribosomal protein uL24 family. Part of the 50S ribosomal subunit.

In terms of biological role, one of two assembly initiator proteins, it binds directly to the 5'-end of the 23S rRNA, where it nucleates assembly of the 50S subunit. One of the proteins that surrounds the polypeptide exit tunnel on the outside of the subunit. The sequence is that of Large ribosomal subunit protein uL24 from Bradyrhizobium sp. (strain BTAi1 / ATCC BAA-1182).